The primary structure comprises 201 residues: MARFRGSNWKKSRRLGISLSGTGKELEKRPYAPGQHGPNQRKKLSEYAIQLREKQKLRYLYGITERQFHNTFIEAGKQSGVHGENFMRLLARRLDAVVYALGLARTRRQARQLVGHGHIEVDGKRVNIPSYTLKPGQVVSVREKSQKLDIIQESVEINNFVPEYLDFDEEKLSGTFVRVPERSELPAEINEQLIVEYYSGK.

Residues 92–155 (RRLDAVVYAL…QKLDIIQESV (64 aa)) enclose the S4 RNA-binding domain.

The protein belongs to the universal ribosomal protein uS4 family. In terms of assembly, part of the 30S ribosomal subunit. Contacts protein S5. The interaction surface between S4 and S5 is involved in control of translational fidelity.

Functionally, one of the primary rRNA binding proteins, it binds directly to 16S rRNA where it nucleates assembly of the body of the 30S subunit. In terms of biological role, with S5 and S12 plays an important role in translational accuracy. The protein is Small ribosomal subunit protein uS4 of Staphylococcus carnosus (strain TM300).